The sequence spans 167 residues: uncharacterized protein (167 aa).

Residues 39–59 traverse the membrane as a helical segment; it reads LSLFSLSPLFLLLSISSLIFS. Residues 92 to 122 are a coiled coil; sequence LGTQIEMITQAMTTLESRVTDLQQESNDHRT. The tract at residues 134 to 167 is disordered; the sequence is RDLGDENRPKPTTNKMIATGEQHKGEVSTSLFHD. Residues 154-167 show a composition bias toward basic and acidic residues; it reads EQHKGEVSTSLFHD.

The protein resides in the mitochondrion membrane. This is an uncharacterized protein from Arabidopsis thaliana (Mouse-ear cress).